A 192-amino-acid chain; its full sequence is Ubiquitin-conjugating enzyme E2 1 (192 aa).

Residues 1-28 (MTTPSRRRLMRDFKKLQEDPPAGVSGAP) are disordered. Positions 4–150 (PSRRRLMRDF…VQQIVEQSWL (147 aa)) constitute a UBC core domain. Cys88 acts as the Glycyl thioester intermediate in catalysis. The disordered stretch occupies residues 171 to 192 (AAPGANDADDDRMDEGASGSNA).

This sequence belongs to the ubiquitin-conjugating enzyme family. In terms of assembly, interacts with ubr-1 and rfp-1. Interacts with ubc-13.

The enzyme catalyses S-ubiquitinyl-[E1 ubiquitin-activating enzyme]-L-cysteine + [E2 ubiquitin-conjugating enzyme]-L-cysteine = [E1 ubiquitin-activating enzyme]-L-cysteine + S-ubiquitinyl-[E2 ubiquitin-conjugating enzyme]-L-cysteine.. Its pathway is protein modification; protein ubiquitination. Its function is as follows. Catalyzes the covalent attachment of ubiquitin to other proteins. This Caenorhabditis elegans protein is Ubiquitin-conjugating enzyme E2 1 (ubc-1).